The primary structure comprises 223 residues: Large ribosomal subunit protein uL3 (223 aa).

The protein belongs to the universal ribosomal protein uL3 family. In terms of assembly, part of the 50S ribosomal subunit. Forms a cluster with proteins L14 and L19.

One of the primary rRNA binding proteins, it binds directly near the 3'-end of the 23S rRNA, where it nucleates assembly of the 50S subunit. This is Large ribosomal subunit protein uL3 from Nocardioides sp. (strain ATCC BAA-499 / JS614).